A 142-amino-acid chain; its full sequence is Large ribosomal subunit protein uL11 (142 aa).

The protein belongs to the universal ribosomal protein uL11 family. As to quaternary structure, part of the ribosomal stalk of the 50S ribosomal subunit. Interacts with L10 and the large rRNA to form the base of the stalk. L10 forms an elongated spine to which L12 dimers bind in a sequential fashion forming a multimeric L10(L12)X complex. One or more lysine residues are methylated.

In terms of biological role, forms part of the ribosomal stalk which helps the ribosome interact with GTP-bound translation factors. The protein is Large ribosomal subunit protein uL11 of Yersinia pestis bv. Antiqua (strain Angola).